Reading from the N-terminus, the 524-residue chain is Phosphoenolpyruvate carboxykinase (ATP) (524 aa).

Residues Arg-52, Tyr-188, and Lys-194 each coordinate substrate. ATP-binding positions include Lys-194, His-213, and 229–237 (GLSGTGKTT). The Mn(2+) site is built by Lys-194 and His-213. Asp-250 lines the Mn(2+) pocket. Residues Glu-278, Arg-314, and Thr-439 each contribute to the ATP site. Arg-314 contacts substrate.

The protein belongs to the phosphoenolpyruvate carboxykinase (ATP) family. Requires Mn(2+) as cofactor.

The protein localises to the cytoplasm. The enzyme catalyses oxaloacetate + ATP = phosphoenolpyruvate + ADP + CO2. It participates in carbohydrate biosynthesis; gluconeogenesis. Its function is as follows. Involved in the gluconeogenesis. Catalyzes the conversion of oxaloacetate (OAA) to phosphoenolpyruvate (PEP) through direct phosphoryl transfer between the nucleoside triphosphate and OAA. This is Phosphoenolpyruvate carboxykinase (ATP) from Campylobacter jejuni (strain RM1221).